The primary structure comprises 479 residues: Nuclear envelope integral membrane protein 2 (479 aa).

The first 23 residues, Met-1–Gly-23, serve as a signal peptide directing secretion. The N-linked (GlcNAc...) asparagine glycan is linked to Asn-69. The next 5 helical transmembrane spans lie at Leu-172 to Leu-192, Leu-203 to Leu-223, His-233 to Tyr-253, Ile-276 to Leu-296, and Ile-301 to Ala-321. N-linked (GlcNAc...) asparagine glycosylation is present at Asn-414. A disordered region spans residues Asn-414–Phe-479. A compositionally biased stretch (low complexity) spans Asn-438 to Pro-449. Residues Thr-450–Pro-470 show a composition bias toward pro residues.

Belongs to the NEMP family.

The protein resides in the nucleus inner membrane. In terms of biological role, contributes to nuclear envelope stiffness in germ cells. Involved in male and female fertility. This is Nuclear envelope integral membrane protein 2 from Danio rerio (Zebrafish).